We begin with the raw amino-acid sequence, 145 residues long: MRHGMANKKLNRTSEHRKALLKNMLNSLIKYEQITTTLPKAKFLKPQADKIITLGKKETLQTTKMLMSKLQDITSANKVKKTLSKRYEARNGGYTRIIKAGFRYGDNAPMAVIEFVDRDVEAKRVDRKKKDPAKDKTEEKKLATA.

The interval 123–145 is disordered; it reads KRVDRKKKDPAKDKTEEKKLATA.

This sequence belongs to the bacterial ribosomal protein bL17 family. Part of the 50S ribosomal subunit. Contacts protein L32.

This is Large ribosomal subunit protein bL17 from Pelagibacter ubique (strain HTCC1062).